The primary structure comprises 157 residues: Probable succinate transporter subunit YjjB (157 aa).

The next 4 helical transmembrane spans lie at 15–35 (ILAA…VQAL), 50–70 (MILM…SMLV), 87–107 (VFTV…TAMI), and 121–141 (LMIT…ALSV).

The protein belongs to the ThrE exporter (TC 2.A.79) family. The transporter is composed of YjjB and YjjP.

It is found in the cell inner membrane. Its function is as follows. Involved in succinate export with YjjP. Both proteins are required for export. In Shigella dysenteriae serotype 1 (strain Sd197), this protein is Probable succinate transporter subunit YjjB.